A 237-amino-acid chain; its full sequence is Cyclic nucleotide phosphodiesterase inhibitor (237 aa).

An N-terminal signal peptide occupies residues 1 to 20 (MAKIIISLILLLSLFSFSYG). Asn28, Asn65, and Asn70 each carry an N-linked (GlcNAc...) asparagine glycan. 5 Cys-rich CT repeats span residues 57–81 (DLCHNSACNASTGNCTLTTISCNDN), 82–105 (NPCTDDFCHPGYGCYSVPNSCDPG), 116–139 (DPCTYDFCDALNICRHSETYCNDG), 140–162 (DACTLNTCGVNGCNFTKISCDDN), and 163–186 (DPCTADYCSTLYGCYHEPIECSIK). An N-linked (GlcNAc...) asparagine glycan is attached at Asn153. An N-linked (GlcNAc...) asparagine glycan is attached at Asn207.

PDI acts by binding stoichiometrically to cyclic nucleotide phosphodiesterase, changing the KM of the enzyme for cAMP from 10 uM to 2 mM. The chain is Cyclic nucleotide phosphodiesterase inhibitor (pdiA) from Dictyostelium discoideum (Social amoeba).